The sequence spans 140 residues: Probable deoxyuridine 5'-triphosphate nucleotidohydrolase (140 aa).

Substrate-binding positions include 62–64, 76–79, arginine 130, and 135–136; these read RSG, GVID, and FG.

It belongs to the dUTPase family. In terms of assembly, homotrimer. Mg(2+) is required as a cofactor.

The catalysed reaction is dUTP + H2O = dUMP + diphosphate + H(+). It functions in the pathway pyrimidine metabolism; dUMP biosynthesis; dUMP from dCTP (dUTP route): step 2/2. This enzyme is involved in nucleotide metabolism: it produces dUMP, the immediate precursor of thymidine nucleotides and it decreases the intracellular concentration of dUTP so that uracil cannot be incorporated into DNA. This is Probable deoxyuridine 5'-triphosphate nucleotidohydrolase from Schizosaccharomyces pombe (strain 972 / ATCC 24843) (Fission yeast).